A 145-amino-acid chain; its full sequence is Putative transcriptional regulatory protein PYRAB13000 (145 aa).

This sequence belongs to the Tfx family.

In terms of biological role, putative transcriptional regulator. This is Putative transcriptional regulatory protein PYRAB13000 from Pyrococcus abyssi (strain GE5 / Orsay).